We begin with the raw amino-acid sequence, 727 residues long: 5'-AMP-activated serine/threonine-protein kinase catalytic subunit alpha (727 aa).

The Protein kinase domain maps to 31–284 (YRLDKTLGIG…IHEIRNHPWF (254 aa)). ATP is bound by residues 37 to 45 (LGIGSFGKV) and lysine 60. Catalysis depends on aspartate 154, which acts as the Proton acceptor. Threonine 188 carries the post-translational modification Phosphothreonine. A disordered region spans residues 382 to 590 (FTTTTGFNPS…GSNNNSYEGG (209 aa)). Low complexity-rich tracts occupy residues 391–483 (SNSN…SSIS) and 494–586 (NLNN…NNNS). The KA1 domain occupies 679 to 727 (RMVNGKPIKLVLQLFRVAENRYLLDIKKIEGEIFIFFDICSLMLEELNL).

Belongs to the protein kinase superfamily. CAMK Ser/Thr protein kinase family. SNF1 subfamily. As to quaternary structure, heterotrimer of an alpha catalytic subunit, a beta and a gamma non-catalytic subunits.

The enzyme catalyses L-seryl-[protein] + ATP = O-phospho-L-seryl-[protein] + ADP + H(+). The catalysed reaction is L-threonyl-[protein] + ATP = O-phospho-L-threonyl-[protein] + ADP + H(+). Its function is as follows. Activated enzyme phosphorylates target proteins and initiates downstream signaling pathways that shift metabolism from anabolic to catabolic pathways. Acts as a highly sensitive cellular energy sensor. The protein is 5'-AMP-activated serine/threonine-protein kinase catalytic subunit alpha (snfA) of Dictyostelium discoideum (Social amoeba).